We begin with the raw amino-acid sequence, 848 residues long: Adenylate cyclase (848 aa).

The segment at 1–535 (MYLYIETLKQ…DVSHHFPLRL (535 aa)) is catalytic. Residues 541-848 (KALYSPCEIR…DAPLLQQYFS (308 aa)) form a regulatory region. Position 609 is a phosphohistidine; by CRR (H609).

The protein belongs to the adenylyl cyclase class-1 family.

It is found in the cytoplasm. It catalyses the reaction ATP = 3',5'-cyclic AMP + diphosphate. The protein is Adenylate cyclase (cyaA) of Escherichia coli O6:H1 (strain CFT073 / ATCC 700928 / UPEC).